The following is a 388-amino-acid chain: uncharacterized protein (388 aa).

Helical transmembrane passes span 18 to 38, 42 to 62, 89 to 111, 116 to 136, 145 to 165, 171 to 191, 219 to 239, 248 to 268, 287 to 307, 341 to 361, and 365 to 385; these read AAMF…PLYV, LHLS…ATLL, ASGL…WAIL, VLLG…GMWL, VISW…PLGL, AGLA…SGVI, TGLV…ALWF, GFAM…CAKF, TGLA…GAAI, AFQD…TPFI, and QVFL…HLLL.

It belongs to the major facilitator superfamily. YfcJ family.

It is found in the cell inner membrane. This is an uncharacterized protein from Salmonella typhimurium (strain LT2 / SGSC1412 / ATCC 700720).